A 192-amino-acid polypeptide reads, in one-letter code: Recombination protein RecR (192 aa).

The C4-type zinc-finger motif lies at 51 to 66 (CQTCFHLSADPECEIC). In terms of domain architecture, Toprim spans 74 to 168 (GLICVVADSR…PVSRIAYGLP (95 aa)).

Belongs to the RecR family.

In terms of biological role, may play a role in DNA repair. It seems to be involved in an RecBC-independent recombinational process of DNA repair. It may act with RecF and RecO. The chain is Recombination protein RecR from Parasynechococcus marenigrum (strain WH8102).